Here is a 156-residue protein sequence, read N- to C-terminus: Small ribosomal subunit protein uS7 (156 aa).

This sequence belongs to the universal ribosomal protein uS7 family. In terms of assembly, part of the 30S ribosomal subunit. Contacts proteins S9 and S11.

One of the primary rRNA binding proteins, it binds directly to 16S rRNA where it nucleates assembly of the head domain of the 30S subunit. Is located at the subunit interface close to the decoding center, probably blocks exit of the E-site tRNA. The polypeptide is Small ribosomal subunit protein uS7 (Shewanella piezotolerans (strain WP3 / JCM 13877)).